The chain runs to 342 residues: Putative TPR repeat-containing protein R856 (342 aa).

7 TPR repeats span residues 36 to 69, 77 to 110, 119 to 152, 161 to 194, 203 to 236, 245 to 278, and 291 to 324; these read VHIFNKAAIVFHRNGQHKKSLEMYEKAFGNIFNG, FYSVNGMASMYQALGDYDIAIKKYNSVIKIIKDM, VYALMGIASISQIKGNYDEALSKYNEALEINEKL, AFVLNRLGMLYHELDDNDKSIDHFNESLKIYREK, AFTISRLAQSLLKMGNDSEALEKYQESIDIFNKI, AFSLYGIGTVYEFRSEYSKALEKYQESLQTYKNV, and ASCLYKIGLVYKLSGNDNESTTYLNQANQMFEST.

The protein is Putative TPR repeat-containing protein R856 of Acanthamoeba polyphaga mimivirus (APMV).